The following is a 298-amino-acid chain: Acetylglutamate kinase (298 aa).

Substrate contacts are provided by residues 64–65 (GG), Arg86, and Asn195.

It belongs to the acetylglutamate kinase family. ArgB subfamily.

It is found in the cytoplasm. The enzyme catalyses N-acetyl-L-glutamate + ATP = N-acetyl-L-glutamyl 5-phosphate + ADP. The protein operates within amino-acid biosynthesis; L-arginine biosynthesis; N(2)-acetyl-L-ornithine from L-glutamate: step 2/4. Its function is as follows. Catalyzes the ATP-dependent phosphorylation of N-acetyl-L-glutamate. This Aquifex aeolicus (strain VF5) protein is Acetylglutamate kinase.